We begin with the raw amino-acid sequence, 394 residues long: NAD(P)H-quinone oxidoreductase subunit H (394 aa).

Belongs to the complex I 49 kDa subunit family. As to quaternary structure, NDH-1 can be composed of about 15 different subunits; different subcomplexes with different compositions have been identified which probably have different functions.

It localises to the cellular thylakoid membrane. The catalysed reaction is a plastoquinone + NADH + (n+1) H(+)(in) = a plastoquinol + NAD(+) + n H(+)(out). The enzyme catalyses a plastoquinone + NADPH + (n+1) H(+)(in) = a plastoquinol + NADP(+) + n H(+)(out). Functionally, NDH-1 shuttles electrons from an unknown electron donor, via FMN and iron-sulfur (Fe-S) centers, to quinones in the respiratory and/or the photosynthetic chain. The immediate electron acceptor for the enzyme in this species is believed to be plastoquinone. Couples the redox reaction to proton translocation, and thus conserves the redox energy in a proton gradient. Cyanobacterial NDH-1 also plays a role in inorganic carbon-concentration. The protein is NAD(P)H-quinone oxidoreductase subunit H of Nostoc sp. (strain PCC 7120 / SAG 25.82 / UTEX 2576).